A 399-amino-acid polypeptide reads, in one-letter code: Bombesin receptor subtype-3 (399 aa).

Over 1 to 41 (MAQRQPHSPNQTLISITNDTESSSSVVSNDNTNKGWSGDNS) the chain is Extracellular. Residues asparagine 10 and asparagine 18 are each glycosylated (N-linked (GlcNAc...) asparagine). A helical transmembrane segment spans residues 42–63 (PGIEALCAIYITYAVIISVGIL). The Cytoplasmic portion of the chain corresponds to 64-82 (GNAILIKVFFKTKSMQTVP). Residues 83–103 (NIFITSLAFGDLLLLLTCVPV) form a helical membrane-spanning segment. The Extracellular portion of the chain corresponds to 104–121 (DATHYLAEGWLFGRIGCK). A disulfide bond links cysteine 120 and cysteine 203. Residues 122–143 (VLSFIRLTSVGVSVFTLTILSA) traverse the membrane as a helical segment. The Cytoplasmic segment spans residues 144 to 163 (DRYKAVVKPLERQPSNAILK). The chain crosses the membrane as a helical span at residues 164-184 (TCVKAGCVWIVSMIFALPEAI). The Extracellular portion of the chain corresponds to 185 to 220 (FSNVYTFRDPNKNMTFESCTSYPVSKKLLQEIHSLL). The helical transmembrane segment at 221-241 (CFLVFYIIPLSIISVYYSLIA) threads the bilayer. Topologically, residues 242–272 (RTLYKSTLNIPTEEQSHARKQIESRKRIART) are cytoplasmic. The chain crosses the membrane as a helical span at residues 273-293 (VLVLVALFALCWLPNHLLYLY). Residues 294-313 (HSFTSQTYVDPSAMHFIFTI) lie on the Extracellular side of the membrane. A helical membrane pass occupies residues 314 to 333 (FSRVLAFSNSCVNPFALYWL). Residues 334–399 (SKSFQKHFKA…CSVKQAEDRF (66 aa)) are Cytoplasmic-facing. Cysteine 347 carries S-palmitoyl cysteine lipidation.

This sequence belongs to the G-protein coupled receptor 1 family. In terms of assembly, interacts with C6orf89. In terms of tissue distribution, in germ cells in testis. Lung carcinoma cells.

The protein localises to the cell membrane. In terms of biological role, role in sperm cell division, maturation, or function. This receptor mediates its action by association with G proteins that activate a phosphatidylinositol-calcium second messenger system. This chain is Bombesin receptor subtype-3 (BRS3), found in Homo sapiens (Human).